The sequence spans 636 residues: 1-deoxy-D-xylulose-5-phosphate synthase (636 aa).

Residues His-75 and Ala-116 to Ser-118 each bind thiamine diphosphate. Asp-147 serves as a coordination point for Mg(2+). Thiamine diphosphate-binding positions include Gly-148 to Ala-149, Asn-177, Tyr-288, and Glu-370. Asn-177 provides a ligand contact to Mg(2+).

This sequence belongs to the transketolase family. DXPS subfamily. As to quaternary structure, homodimer. Requires Mg(2+) as cofactor. The cofactor is thiamine diphosphate.

It carries out the reaction D-glyceraldehyde 3-phosphate + pyruvate + H(+) = 1-deoxy-D-xylulose 5-phosphate + CO2. Its pathway is metabolic intermediate biosynthesis; 1-deoxy-D-xylulose 5-phosphate biosynthesis; 1-deoxy-D-xylulose 5-phosphate from D-glyceraldehyde 3-phosphate and pyruvate: step 1/1. In terms of biological role, catalyzes the acyloin condensation reaction between C atoms 2 and 3 of pyruvate and glyceraldehyde 3-phosphate to yield 1-deoxy-D-xylulose-5-phosphate (DXP). The protein is 1-deoxy-D-xylulose-5-phosphate synthase of Ralstonia pickettii (strain 12J).